The sequence spans 269 residues: Myelin protein zero-like protein 1 (269 aa).

A signal peptide spans 1-35 (MAASAGAGAVIAAPDSRRWLWSVLAAALGLLTAGV). The region spanning 36–146 (SALEVYTPKE…VKNPPDIVVQ (111 aa)) is the Ig-like V-type domain. Residues 36-162 (SALEVYTPKE…YVVEKENLPV (127 aa)) lie on the Extracellular side of the membrane. Residues Asn50 and Asn130 are each glycosylated (N-linked (GlcNAc...) asparagine). Cys58 and Cys135 are oxidised to a cystine. The chain crosses the membrane as a helical span at residues 163–183 (FPVWVVVGIVTAVVLGLTLLI). The Cytoplasmic segment spans residues 184–269 (SMILAVLYRR…SVVYADIRKN (86 aa)). The interval 199–238 (DYTGCSTSESLSPVKQAPRKSPSDTEGLVKSLPSGSHQGP) is disordered. The span at 202–211 (GCSTSESLSP) shows a compositional bias: polar residues. Residues Ser204, Ser206, Ser208, Ser210, Ser219, and Ser221 each carry the phosphoserine modification. Residues 239 to 244 (VIYAQL) carry the ITIM motif 1 motif. A Phosphotyrosine modification is found at Tyr241. Ser260 is modified (phosphoserine). Positions 261 to 266 (VVYADI) match the ITIM motif 2 motif. Tyr263 bears the Phosphotyrosine mark.

The protein belongs to the myelin P0 protein family. As to quaternary structure, interacts with phosphorylated PTPN11/SHP-2. Phosphorylated on tyrosine residues upon stimulation with pervanadate and concanavalin-A (ConA). Phosphorylation at Tyr-241 and Tyr-263 is required for interaction with PTPN11/SHP-2. Dephosphorylated by PTPN11/SHP-2 (in vitro). In terms of processing, N-glycosylated. N-glycosylation is required for concanavalin A binding. Widely expressed with highest levels in heart, placenta, kidney and pancreas. Isoform 3 is relatively abundant in hematopoietic tissues and fetal liver. Isoform 1 and isoform 3 are expressed in CD14- PB monocytes and pre-B cell progenitors. Isoform 3 appears to be the major isoform in CD34- promyelocytic and promonocytic cells. During differentiation in monocytic cells, the expression level of isoform 3 decreases and that of isoform 1 increases. Isoform 1 is prominent in stromal cells and, to a lesser extent, in umbilical vein endothelial cells and erythroid progenitors. Isoform 2 is expressed in a erythroid progenitor cell line.

It is found in the membrane. Functionally, cell surface receptor, which is involved in signal transduction processes. Recruits PTPN11/SHP-2 to the cell membrane and is a putative substrate of PTPN11/SHP-2. Is a major receptor for concanavalin-A (ConA) and is involved in cellular signaling induced by ConA, which probably includes Src family tyrosine-protein kinases. Isoform 3 seems to have a dominant negative role; it blocks tyrosine phosphorylation of MPZL1 induced by ConA. Isoform 1, but not isoform 2 and isoform 3, may be involved in regulation of integrin-mediated cell motility. The protein is Myelin protein zero-like protein 1 (MPZL1) of Homo sapiens (Human).